The primary structure comprises 412 residues: Peptidase T (412 aa).

Zn(2+) is bound at residue H84. Residue D86 is part of the active site. Position 146 (D146) interacts with Zn(2+). The Proton acceptor role is filled by E179. E180, D202, and H385 together coordinate Zn(2+).

The protein belongs to the peptidase M20B family. Requires Zn(2+) as cofactor.

The protein resides in the cytoplasm. The enzyme catalyses Release of the N-terminal residue from a tripeptide.. Cleaves the N-terminal amino acid of tripeptides. This is Peptidase T from Pasteurella multocida (strain Pm70).